The sequence spans 330 residues: Aspartate--ammonia ligase (330 aa).

The protein belongs to the class-II aminoacyl-tRNA synthetase family. AsnA subfamily.

It is found in the cytoplasm. The enzyme catalyses L-aspartate + NH4(+) + ATP = L-asparagine + AMP + diphosphate + H(+). It functions in the pathway amino-acid biosynthesis; L-asparagine biosynthesis; L-asparagine from L-aspartate (ammonia route): step 1/1. The chain is Aspartate--ammonia ligase from Treponema pallidum (strain Nichols).